The sequence spans 542 residues: GMP synthase [glutamine-hydrolyzing] (542 aa).

In terms of domain architecture, Glutamine amidotransferase type-1 spans Ile28–Thr218. The Nucleophile role is filled by Cys105. Active-site residues include His192 and Glu194. The GMPS ATP-PPase domain occupies Trp219 to Arg417. Ser246–Ser252 lines the ATP pocket.

As to quaternary structure, homodimer.

The catalysed reaction is XMP + L-glutamine + ATP + H2O = GMP + L-glutamate + AMP + diphosphate + 2 H(+). Its pathway is purine metabolism; GMP biosynthesis; GMP from XMP (L-Gln route): step 1/1. Catalyzes the synthesis of GMP from XMP. This is GMP synthase [glutamine-hydrolyzing] (guaA) from Synechocystis sp. (strain ATCC 27184 / PCC 6803 / Kazusa).